Consider the following 229-residue polypeptide: Ribonuclease 3 (229 aa).

The RNase III domain maps to 5-127 (LARLERKLGY…LIGAIYLDAD (123 aa)). Glu40 contributes to the Mg(2+) binding site. Residue Asp44 is part of the active site. Residues Asp113 and Glu116 each contribute to the Mg(2+) site. The active site involves Glu116. Positions 154 to 224 (DPKTRLQEFL…AASALIALGV (71 aa)) constitute a DRBM domain.

This sequence belongs to the ribonuclease III family. In terms of assembly, homodimer. Mg(2+) is required as a cofactor.

It is found in the cytoplasm. The catalysed reaction is Endonucleolytic cleavage to 5'-phosphomonoester.. Digests double-stranded RNA. Involved in the processing of primary rRNA transcript to yield the immediate precursors to the large and small rRNAs (23S and 16S). Processes some mRNAs, and tRNAs when they are encoded in the rRNA operon. Processes pre-crRNA and tracrRNA of type II CRISPR loci if present in the organism. This is Ribonuclease 3 from Pseudomonas putida (strain GB-1).